The sequence spans 172 residues: Ribosome maturation factor RimM (172 aa).

The 74-residue stretch at 95–168 folds into the PRC barrel domain; sequence DDGEFYYHEI…RVDVEILEGL (74 aa).

This sequence belongs to the RimM family. Binds ribosomal protein uS19.

It localises to the cytoplasm. In terms of biological role, an accessory protein needed during the final step in the assembly of 30S ribosomal subunit, possibly for assembly of the head region. Essential for efficient processing of 16S rRNA. May be needed both before and after RbfA during the maturation of 16S rRNA. It has affinity for free ribosomal 30S subunits but not for 70S ribosomes. The sequence is that of Ribosome maturation factor RimM from Streptococcus pneumoniae (strain P1031).